We begin with the raw amino-acid sequence, 244 residues long: L-xylulose reductase (244 aa).

Position 1 is an N-acetylmethionine (Met1). 11-40 contacts NADP(+); it reads LVTGAGKGIGRGTVQALHATGARVVAVSRT. Residue Arg21 is modified to Omega-N-methylarginine. At Ser46 the chain carries Phosphoserine. Residue Ser136 participates in substrate binding. The Proton acceptor role is filled by Tyr149. Lys153 is an NADP(+) binding site.

Belongs to the short-chain dehydrogenases/reductases (SDR) family. As to quaternary structure, homotetramer. As to expression, highly expressed in kidney, liver and epididymis. In the epididymis, it is mainly expressed in the proximal and distal sections of the corpus region. Weakly or not expressed in brain, lung, heart, spleen and testis.

It localises to the membrane. It carries out the reaction xylitol + NADP(+) = L-xylulose + NADPH + H(+). Functionally, catalyzes the NADPH-dependent reduction of several pentoses, tetroses, trioses, alpha-dicarbonyl compounds and L-xylulose. Participates in the uronate cycle of glucose metabolism. May play a role in the water absorption and cellular osmoregulation in the proximal renal tubules by producing xylitol, an osmolyte, thereby preventing osmolytic stress from occurring in the renal tubules. The chain is L-xylulose reductase (DCXR) from Homo sapiens (Human).